Reading from the N-terminus, the 866-residue chain is Potassium voltage-gated channel subfamily KQT member 3 (866 aa).

The segment at Met-1–Lys-42 is disordered. The Cytoplasmic segment spans residues Met-1–Gly-120. Residues Ala-11–Ala-25 show a composition bias toward gly residues. The span at Ala-26–Ala-36 shows a compositional bias: low complexity. Thr-81 is subject to Phosphothreonine. The helical transmembrane segment at Trp-121–Thr-143 threads the bilayer. Residues Thr-144 to Gly-153 lie on the Extracellular side of the membrane. A helical membrane pass occupies residues Asp-154–Ile-175. Residues Trp-176 to Phe-193 lie on the Cytoplasmic side of the membrane. A helical transmembrane segment spans residues Ala-194–Val-213. The Extracellular portion of the chain corresponds to Ala-214–Ser-225. A helical; Voltage-sensor membrane pass occupies residues Leu-226–Gly-244. Arg-243 is a binding site for a 1,2-diacyl-sn-glycero-3-phospho-(1D-myo-inositol-4,5-bisphosphate). The Cytoplasmic portion of the chain corresponds to Gly-245–Ala-256. The helical transmembrane segment at His-257–Val-282 threads the bilayer. Lys-259 is an a 1,2-diacyl-sn-glycero-3-phospho-(1D-myo-inositol-4,5-bisphosphate) binding site. The Extracellular portion of the chain corresponds to Glu-283–Thr-302. Positions Tyr-303–Ala-315 form an intramembrane region, pore-forming. The short motif at Thr-316 to Asp-321 is the Selectivity filter element. At Thr-316–Thr-326 the chain is on the extracellular side. The helical transmembrane segment at Trp-327–Ser-353 threads the bilayer. Topologically, residues Gly-354 to Thr-866 are cytoplasmic. Positions Ala-356–Thr-537 are mediates interaction with calmodulin. Position 366 (Lys-366) interacts with a 1,2-diacyl-sn-glycero-3-phospho-(1D-myo-inositol-4,5-bisphosphate). Disordered stretches follow at residues Pro-574–Ser-617, Gly-656–Arg-676, and Gln-757–Thr-866. Positions Glu-837 to Thr-866 are enriched in polar residues.

Belongs to the potassium channel family. KQT (TC 1.A.1.15) subfamily. Kv7.3/KCNQ3 sub-subfamily. In terms of assembly, heterotetramer with KCNQ2; forms heterotetrameric native M-channel responsible for the M-current. Interacts with calmodulin; the interaction is calcium-independent, constitutive and participates in the proper assembly of a functional M-channel. Heteromultimer with KCNQ5. May associate with KCNE2. Interacts with IQCJ-SCHIP1. Interacts (via the pore module) with SLC5A3/SMIT1; forms a coregulatory complex that alters ion selectivity, voltage dependence and gating kinetics of the channel. KCNQ2/KCNQ3 are ubiquitinated by NEDD4L. Ubiquitination leads to protein degradation. Degradation induced by NEDD4L is inhibited by USP36.

The protein localises to the cell membrane. It carries out the reaction K(+)(in) = K(+)(out). The catalysed reaction is Rb(+)(in) = Rb(+)(out). It catalyses the reaction Cs(+)(in) = Cs(+)(out). The enzyme catalyses Na(+)(in) = Na(+)(out). Its activity is regulated as follows. Phosphatidylinositol-4,5-bisphosphate (PIP2) potentiates the activation of KCNQ channels by enhancing the electro-mechanical coupling of the voltage-sensing domain (VSD) and the pore-forming domain (PD). In the closed state of the channel, PIP2 is anchored at the S2-S3 loop; upon channel activation, PIP2 interacts with the S4-S5 linker and is involved in channel gating. Calcium suppresses KCNQ2-KCNQ3 channel currents, with calcium-bound calmodulin inducing a change in channel configuration which leads to the reduction of channel affinity for PIP2 and subsequent current suppression. Its function is as follows. Pore-forming subunit of the voltage-gated potassium (Kv) M-channel which is responsible for the M-current, a key controller of neuronal excitability. M-channel is composed of pore-forming subunits KCNQ2 and KCNQ3 assembled as heterotetramers. The native M-current has a slowly activating and deactivating potassium conductance which plays a critical role in determining the subthreshold electrical excitability of neurons as well as the responsiveness to synaptic inputs. M-channel is selectively permeable in vitro to other cations besides potassium, in decreasing order of affinity K(+) &gt; Rb(+) &gt; Cs(+) &gt; Na(+). M-channel association with SLC5A3/SMIT1 alters channel ion selectivity, increasing Na(+) and Cs(+) permeation relative to K(+). Suppressed by activation of M1 muscarinic acetylcholine receptors. KCNQ3 also associates with KCNQ5 to form a functional channel in vitro and may also contribute to the M-current in brain. The polypeptide is Potassium voltage-gated channel subfamily KQT member 3 (Bos taurus (Bovine)).